The sequence spans 368 residues: Ubl carboxyl-terminal hydrolase 18 (368 aa).

Residues 31 to 48 (MKRKRVLSRDLCSAWDSP) form a mediates interaction with IFNAR2 region. Residues 48–109 (PHGLVGLHNI…LLLLLEKMQD (62 aa)) form a mediates interaction with STAT2 region. One can recognise a USP domain in the interval 52 to 366 (VGLHNIGQTC…TAYLLVYTKT (315 aa)). The active-site Nucleophile is the Cys-61. Residues 299 to 308 (ELFAVIAHVG) are mediates interaction with STAT2 and necessary for the negative regulation of the type I IFN signaling pathway. The segment at 309–368 (MADFGHYCAYIRNPVDGKWFCFNDSHVCWVTWKDVQCTYGNHRYRWRETAYLLVYTKTGS) is mediates interaction with IFNAR2. Residue His-314 is the Proton acceptor of the active site.

This sequence belongs to the peptidase C19 family. Interacts with STAT2; the interaction is direct. Interacts with IFNAR2; indirectly via STAT2, it negatively regulates the assembly of the ternary interferon-IFNAR1-IFNAR2 complex and inhibits type I interferon signaling. Interacts with STING1. Interacts with USP20.

It carries out the reaction Thiol-dependent hydrolysis of ester, thioester, amide, peptide and isopeptide bonds formed by the C-terminal Gly of ubiquitin (a 76-residue protein attached to proteins as an intracellular targeting signal).. Its function is as follows. Interferon-induced ISG15-specific protease that plays a crucial role for maintaining a proper balance of ISG15-conjugated proteins in cells. Regulates protein ISGylation by efficiently cleaving ISG15 conjugates linked via isopeptide bonds. Regulates T-cell activation and T-helper 17 (Th17) cell differentiation by deubiquitinating TAK1, likely to keep TAK1-TAB complexes in steady conditions. In turn, restricts activation of NF-kappa-B, NFAT, and JNK as well as expression of IL2 in T-cells after TCR activation. Acts as a molecular adapter with USP20 to promote innate antiviral response through deubiquitinating STING1. Involved also in the negative regulation of the inflammatory response triggered by type I interferon. Upon recruitment by STAT2 to the type I interferon receptor subunit IFNAR2 interferes with the assembly of the ternary interferon-IFNAR1-IFNAR2 complex and acts as a negative regulator of the type I interferon signaling pathway. The chain is Ubl carboxyl-terminal hydrolase 18 (Usp18) from Mus musculus (Mouse).